Reading from the N-terminus, the 24-residue chain is Brevinin-1HSa (24 aa).

A disulfide bridge links Cys-18 with Cys-24.

As to expression, expressed by the skin glands.

It is found in the secreted. In terms of biological role, has antibacterial activity against the Gram-positive bacterium S.aureus ATCC 25923 (MIC=3 uM) and the Gram-negative bacterium E.coli ATCC 25726 (MIC=24 uM). The chain is Brevinin-1HSa from Odorrana hosii (Hose's rock frog).